The chain runs to 722 residues: D-(-)-3-hydroxybutyrate oligomer hydrolase (722 aa).

The first 25 residues, M1–G25, serve as a signal peptide directing secretion. S319 acts as the Charge relay system in catalysis.

It belongs to the D-(-)-3-hydroxybutyrate oligomer hydrolase family.

The protein localises to the secreted. It catalyses the reaction (3R)-hydroxybutanoate dimer + H2O = 2 (R)-3-hydroxybutanoate + H(+). Its pathway is lipid metabolism; butanoate metabolism. Inhibited by diisopropylfluorophosphate (DFP). In terms of biological role, participates in the degradation of poly-3-hydroxybutyrate (PHB). It works downstream of poly(3-hydroxybutyrate) depolymerase, hydrolyzing D(-)-3-hydroxybutyrate oligomers of various length (3HB-oligomers) into 3HB-monomers. The sequence is that of D-(-)-3-hydroxybutyrate oligomer hydrolase from Ralstonia pickettii (Burkholderia pickettii).